The sequence spans 238 residues: Putative pectate lyase X (238 aa).

Residues 1–22 form the signal peptide; it reads MKYLLPTAAAGLLLLAAQPAMA. The Ca(2+) site is built by D153, E188, and D192.

The protein belongs to the polysaccharide lyase 1 family. Requires Ca(2+) as cofactor.

The catalysed reaction is Eliminative cleavage of (1-&gt;4)-alpha-D-galacturonan to give oligosaccharides with 4-deoxy-alpha-D-galact-4-enuronosyl groups at their non-reducing ends.. The protein operates within glycan metabolism; pectin degradation; 2-dehydro-3-deoxy-D-gluconate from pectin: step 2/5. Functionally, involved in maceration and soft-rotting of plant tissue. This Pectobacterium carotovorum (Erwinia carotovora) protein is Putative pectate lyase X (PEL X).